The primary structure comprises 675 residues: NADH-ubiquinone oxidoreductase chain 5 (675 aa).

19 helical membrane passes run 3-23, 27-47, 75-95, 108-127, 132-154, 177-197, 211-231, 251-271, 284-304, 311-329, 334-354, 380-400, 413-433, 462-482, 519-539, 564-584, 593-613, 624-644, and 649-669; these read LLPL…GKFL, VLFV…WIFY, FLFD…SLLV, HIIR…LMLV, FVQL…NFWY, IYFS…GVVF, FLGF…LGAI, TPVS…FVLI, LFLV…VGLV, VIAY…ACGM, VGLF…LGAG, YVAI…TGFY, FSIN…ITSF, SFIF…GFIF, LIPL…YFVI, YFDL…FYLL, LIEL…SIIF, YIFV…SLFF, and SFFN…LSFG.

The protein belongs to the complex I subunit 5 family.

It is found in the mitochondrion inner membrane. The catalysed reaction is a ubiquinone + NADH + 5 H(+)(in) = a ubiquinol + NAD(+) + 4 H(+)(out). Its function is as follows. Core subunit of the mitochondrial membrane respiratory chain NADH dehydrogenase (Complex I) that is believed to belong to the minimal assembly required for catalysis. Complex I functions in the transfer of electrons from NADH to the respiratory chain. The immediate electron acceptor for the enzyme is believed to be ubiquinone. The sequence is that of NADH-ubiquinone oxidoreductase chain 5 (ND5) from Acanthamoeba castellanii (Amoeba).